A 485-amino-acid polypeptide reads, in one-letter code: Probable phosphomannomutase (485 aa).

The active-site Phosphoserine intermediate is the Ser86. Ser86, Asp236, Asp238, and Asp240 together coordinate Mg(2+).

This sequence belongs to the phosphohexose mutase family. The cofactor is Mg(2+).

The enzyme catalyses alpha-D-mannose 1-phosphate = D-mannose 6-phosphate. The sequence is that of Probable phosphomannomutase from Haemophilus influenzae (strain ATCC 51907 / DSM 11121 / KW20 / Rd).